The primary structure comprises 40 residues: Photosystem II reaction center protein J (40 aa).

The chain crosses the membrane as a helical span at residues 8 to 28 (IPLWVIGTVAGILVIGLIGIF).

This sequence belongs to the PsbJ family. In terms of assembly, PSII is composed of 1 copy each of membrane proteins PsbA, PsbB, PsbC, PsbD, PsbE, PsbF, PsbH, PsbI, PsbJ, PsbK, PsbL, PsbM, PsbT, PsbX, PsbY, PsbZ, Psb30/Ycf12, at least 3 peripheral proteins of the oxygen-evolving complex and a large number of cofactors. It forms dimeric complexes.

Its subcellular location is the plastid. It localises to the chloroplast thylakoid membrane. In terms of biological role, one of the components of the core complex of photosystem II (PSII). PSII is a light-driven water:plastoquinone oxidoreductase that uses light energy to abstract electrons from H(2)O, generating O(2) and a proton gradient subsequently used for ATP formation. It consists of a core antenna complex that captures photons, and an electron transfer chain that converts photonic excitation into a charge separation. The protein is Photosystem II reaction center protein J of Lepidium virginicum (Virginia pepperweed).